Here is a 94-residue protein sequence, read N- to C-terminus: Small ribosomal subunit protein uS19 (94 aa).

This sequence belongs to the universal ribosomal protein uS19 family.

Protein S19 forms a complex with S13 that binds strongly to the 16S ribosomal RNA. The protein is Small ribosomal subunit protein uS19 of Buchnera aphidicola subsp. Cinara cedri (strain Cc).